The chain runs to 303 residues: Probable alpha-L-glutamate ligase 1 (303 aa).

Positions 104–287 (LQLLSRKGVG…IAGLIYSFIE (184 aa)) constitute an ATP-grasp domain. Residues Lys141, 178 to 179 (EF), Asp187, and 211 to 213 (RSN) contribute to the ATP site. Positions 248, 260, and 262 each coordinate Mg(2+). Positions 248, 260, and 262 each coordinate Mn(2+).

Belongs to the RimK family. Mg(2+) serves as cofactor. The cofactor is Mn(2+).

The polypeptide is Probable alpha-L-glutamate ligase 1 (Hahella chejuensis (strain KCTC 2396)).